The primary structure comprises 407 residues: DNA-directed RNA polymerase subunit Rpo1C (407 aa).

It belongs to the RNA polymerase beta' chain family. As to quaternary structure, part of the RNA polymerase complex.

The protein localises to the cytoplasm. The catalysed reaction is RNA(n) + a ribonucleoside 5'-triphosphate = RNA(n+1) + diphosphate. Functionally, DNA-dependent RNA polymerase (RNAP) catalyzes the transcription of DNA into RNA using the four ribonucleoside triphosphates as substrates. Forms part of the jaw domain. This chain is DNA-directed RNA polymerase subunit Rpo1C, found in Aeropyrum pernix (strain ATCC 700893 / DSM 11879 / JCM 9820 / NBRC 100138 / K1).